A 134-amino-acid chain; its full sequence is Prefoldin subunit 4 (134 aa).

At alanine 2 the chain carries N-acetylalanine. Serine 125 carries the post-translational modification Phosphoserine.

Belongs to the prefoldin subunit beta family. In terms of assembly, heterohexamer of two PFD-alpha type and four PFD-beta type subunits. Interacts with URI1; the interaction is phosphorylation-dependent and occurs in a growth-dependent manner.

It localises to the nucleus. Its subcellular location is the cytoplasm. The protein localises to the mitochondrion. Its function is as follows. Binds specifically to cytosolic chaperonin (c-CPN) and transfers target proteins to it. Binds to nascent polypeptide chain and promotes folding in an environment in which there are many competing pathways for nonnative proteins. The protein is Prefoldin subunit 4 (PFDN4) of Bos taurus (Bovine).